A 240-amino-acid chain; its full sequence is FMN-dependent NADH:quinone oxidoreductase 2 (240 aa).

FMN-binding positions include serine 10 and serine 23–serine 25.

Belongs to the azoreductase type 1 family. In terms of assembly, homodimer. It depends on FMN as a cofactor.

The enzyme catalyses 2 a quinone + NADH + H(+) = 2 a 1,4-benzosemiquinone + NAD(+). The catalysed reaction is N,N-dimethyl-1,4-phenylenediamine + anthranilate + 2 NAD(+) = 2-(4-dimethylaminophenyl)diazenylbenzoate + 2 NADH + 2 H(+). In terms of biological role, quinone reductase that provides resistance to thiol-specific stress caused by electrophilic quinones. Also exhibits azoreductase activity. Catalyzes the reductive cleavage of the azo bond in aromatic azo compounds to the corresponding amines. This Idiomarina loihiensis (strain ATCC BAA-735 / DSM 15497 / L2-TR) protein is FMN-dependent NADH:quinone oxidoreductase 2.